The following is a 236-amino-acid chain: Alpha-acetolactate decarboxylase (236 aa).

This sequence belongs to the alpha-acetolactate decarboxylase family.

The catalysed reaction is (2S)-2-acetolactate + H(+) = (R)-acetoin + CO2. It participates in polyol metabolism; (R,R)-butane-2,3-diol biosynthesis; (R,R)-butane-2,3-diol from pyruvate: step 2/3. Functionally, converts acetolactate into acetoin. The chain is Alpha-acetolactate decarboxylase (aldB) from Lactococcus lactis subsp. lactis (strain IL1403) (Streptococcus lactis).